Here is a 321-residue protein sequence, read N- to C-terminus: tRNA(Ile)-lysidine synthase (321 aa).

An ATP-binding site is contributed by 30–35 (SGGSDS).

It belongs to the tRNA(Ile)-lysidine synthase family.

The protein resides in the cytoplasm. It catalyses the reaction cytidine(34) in tRNA(Ile2) + L-lysine + ATP = lysidine(34) in tRNA(Ile2) + AMP + diphosphate + H(+). Its function is as follows. Ligates lysine onto the cytidine present at position 34 of the AUA codon-specific tRNA(Ile) that contains the anticodon CAU, in an ATP-dependent manner. Cytidine is converted to lysidine, thus changing the amino acid specificity of the tRNA from methionine to isoleucine. The protein is tRNA(Ile)-lysidine synthase of Chlamydia muridarum (strain MoPn / Nigg).